We begin with the raw amino-acid sequence, 476 residues long: Glycogen synthase (476 aa).

Residue Lys15 coordinates ADP-alpha-D-glucose.

It belongs to the glycosyltransferase 1 family. Bacterial/plant glycogen synthase subfamily.

The enzyme catalyses [(1-&gt;4)-alpha-D-glucosyl](n) + ADP-alpha-D-glucose = [(1-&gt;4)-alpha-D-glucosyl](n+1) + ADP + H(+). Its pathway is glycan biosynthesis; glycogen biosynthesis. In terms of biological role, synthesizes alpha-1,4-glucan chains using ADP-glucose. This chain is Glycogen synthase, found in Leptospira biflexa serovar Patoc (strain Patoc 1 / Ames).